A 324-amino-acid chain; its full sequence is Beta-ketoacyl-[acyl-carrier-protein] synthase III (324 aa).

Active-site residues include Cys-114 and His-251. Positions 252-256 (QANKR) are ACP-binding. Asn-281 is a catalytic residue.

This sequence belongs to the thiolase-like superfamily. FabH family. Homodimer.

The protein resides in the cytoplasm. It catalyses the reaction malonyl-[ACP] + acetyl-CoA + H(+) = 3-oxobutanoyl-[ACP] + CO2 + CoA. The protein operates within lipid metabolism; fatty acid biosynthesis. Catalyzes the condensation reaction of fatty acid synthesis by the addition to an acyl acceptor of two carbons from malonyl-ACP. Catalyzes the first condensation reaction which initiates fatty acid synthesis and may therefore play a role in governing the total rate of fatty acid production. Possesses both acetoacetyl-ACP synthase and acetyl transacylase activities. Its substrate specificity determines the biosynthesis of branched-chain and/or straight-chain of fatty acids. The protein is Beta-ketoacyl-[acyl-carrier-protein] synthase III of Bradyrhizobium sp. (strain BTAi1 / ATCC BAA-1182).